We begin with the raw amino-acid sequence, 316 residues long: ATP synthase gamma chain (316 aa).

Belongs to the ATPase gamma chain family. As to quaternary structure, F-type ATPases have 2 components, CF(1) - the catalytic core - and CF(0) - the membrane proton channel. CF(1) has five subunits: alpha(3), beta(3), gamma(1), delta(1), epsilon(1). CF(0) has three main subunits: a, b and c.

It localises to the cellular thylakoid membrane. Produces ATP from ADP in the presence of a proton gradient across the membrane. The gamma chain is believed to be important in regulating ATPase activity and the flow of protons through the CF(0) complex. The sequence is that of ATP synthase gamma chain from Synechococcus elongatus (strain ATCC 33912 / PCC 7942 / FACHB-805) (Anacystis nidulans R2).